A 335-amino-acid chain; its full sequence is Ferrochelatase (335 aa).

H194 and E275 together coordinate Fe cation.

Belongs to the ferrochelatase family.

It localises to the cytoplasm. It catalyses the reaction heme b + 2 H(+) = protoporphyrin IX + Fe(2+). It participates in porphyrin-containing compound metabolism; protoheme biosynthesis; protoheme from protoporphyrin-IX: step 1/1. Functionally, catalyzes the ferrous insertion into protoporphyrin IX. The chain is Ferrochelatase from Sodalis glossinidius (strain morsitans).